Here is a 248-residue protein sequence, read N- to C-terminus: 2,3-bisphosphoglycerate-dependent phosphoglycerate mutase (248 aa).

Residues 8-15, 21-22, R60, 87-90, K98, 114-115, and 183-184 each bind substrate; these read RHGESEWN, TG, ERHY, RR, and GN. Catalysis depends on H9, which acts as the Tele-phosphohistidine intermediate. E87 serves as the catalytic Proton donor/acceptor.

The protein belongs to the phosphoglycerate mutase family. BPG-dependent PGAM subfamily.

The enzyme catalyses (2R)-2-phosphoglycerate = (2R)-3-phosphoglycerate. It functions in the pathway carbohydrate degradation; glycolysis; pyruvate from D-glyceraldehyde 3-phosphate: step 3/5. Catalyzes the interconversion of 2-phosphoglycerate and 3-phosphoglycerate. This chain is 2,3-bisphosphoglycerate-dependent phosphoglycerate mutase, found in Borreliella burgdorferi (strain ATCC 35210 / DSM 4680 / CIP 102532 / B31) (Borrelia burgdorferi).